We begin with the raw amino-acid sequence, 299 residues long: Oxygen-dependent coproporphyrinogen-III oxidase (299 aa).

Residue Ser-92 coordinates substrate. Residues His-96 and His-106 each contribute to the a divalent metal cation site. The active-site Proton donor is the His-106. Position 108-110 (108-110 (NVR)) interacts with substrate. His-145 and His-175 together coordinate a divalent metal cation. Residues 240–275 (YVEFNLVWDRGTLFGLQTGGRTESILMSMPPLVRWE) form an important for dimerization region. Position 258 to 260 (258 to 260 (GGR)) interacts with substrate.

Belongs to the aerobic coproporphyrinogen-III oxidase family. In terms of assembly, homodimer. Requires a divalent metal cation as cofactor.

The protein resides in the cytoplasm. It catalyses the reaction coproporphyrinogen III + O2 + 2 H(+) = protoporphyrinogen IX + 2 CO2 + 2 H2O. The protein operates within porphyrin-containing compound metabolism; protoporphyrin-IX biosynthesis; protoporphyrinogen-IX from coproporphyrinogen-III (O2 route): step 1/1. Involved in the heme biosynthesis. Catalyzes the aerobic oxidative decarboxylation of propionate groups of rings A and B of coproporphyrinogen-III to yield the vinyl groups in protoporphyrinogen-IX. The protein is Oxygen-dependent coproporphyrinogen-III oxidase of Salmonella schwarzengrund (strain CVM19633).